We begin with the raw amino-acid sequence, 142 residues long: Protein KNATM (142 aa).

Positions lysine 4–arginine 36 form a coiled coil.

In terms of assembly, interacts with KNAT1, KNAT3, KNAT4, BEL1, BLH2, BLH4 and BLH9, but not with BLH8 or the KNATM-A and KNATM-C isoforms. Isoforms KNATM-A and KNATM-C: no interactions with KNATM-B, KNOXX or BELL proteins. In terms of tissue distribution, detected in inflorescences, seedlings, leaves, hydathodes, stems, roots, embryo and siliques. Expressed in a polar pattern in organ primordia and at the boundary of mature organs. Detected in the lateral domains of flower meristems, but not in the inflorescence meristem or the vegetative shoot apical meristem.

It is found in the cytoplasm. The protein resides in the nucleus. In terms of biological role, transcriptional regulator involved in leaf proximal/distal patterning. May act by sequestering BELL transcription factors. This is Protein KNATM from Arabidopsis thaliana (Mouse-ear cress).